We begin with the raw amino-acid sequence, 251 residues long: Triosephosphate isomerase (251 aa).

A substrate-binding site is contributed by 9 to 11; sequence NWK. H96 serves as the catalytic Electrophile. Residue E166 is the Proton acceptor of the active site. Substrate is bound by residues G172, S212, and 233 to 234; that span reads GG.

The protein belongs to the triosephosphate isomerase family. As to quaternary structure, homodimer.

It localises to the cytoplasm. It carries out the reaction D-glyceraldehyde 3-phosphate = dihydroxyacetone phosphate. The protein operates within carbohydrate biosynthesis; gluconeogenesis. It functions in the pathway carbohydrate degradation; glycolysis; D-glyceraldehyde 3-phosphate from glycerone phosphate: step 1/1. In terms of biological role, involved in the gluconeogenesis. Catalyzes stereospecifically the conversion of dihydroxyacetone phosphate (DHAP) to D-glyceraldehyde-3-phosphate (G3P). The chain is Triosephosphate isomerase from Pelodictyon phaeoclathratiforme (strain DSM 5477 / BU-1).